The primary structure comprises 461 residues: Transcription factor phm6 (461 aa).

A DNA-binding region (zn(2)-C6 fungal-type) is located at residues 18-50 (CNRCRNHKLKCVVTEAPNGTACCQRCIRAMVPC). Disordered stretches follow at residues 55 to 79 (RERKKRGSSPRVVPQSPWMHSPWET) and 256 to 278 (LQTDDSSSTQSESSRSRASVGAT). The segment covering 256-274 (LQTDDSSSTQSESSRSRAS) has biased composition (low complexity).

The protein resides in the nucleus. Transcription factor that regulates the expression of the gene cluster that mediates the biosynthesis of the trans-fused decalin-containing tetramic acid phomasetin. The protein is Transcription factor phm6 of Pyrenochaetopsis sp.